We begin with the raw amino-acid sequence, 216 residues long: MAMTEESVDQVEVNCLCVQHGQSCNNTRCFVKEGLRANWFYNPVLEEFAIPDSYQEGHGVNVKITFSHRSRNTGQIPLCLSNGTCHISEKGLHFSANFSKDGLYIAIINETNYHAAEHYYLVYIYENCHQMPYDSPRHTGHNGTSFNWSMGLWLVKCSHNKTFFLPFVLDSAKSAPIIMTETAITIYISMIFLIVSLLTFLNVLITLNNKYKHYGV.

Residues asparagine 25, asparagine 82, asparagine 97, asparagine 109, asparagine 142, asparagine 147, and asparagine 160 are each glycosylated (N-linked (GlcNAc...) asparagine; by host).

The polypeptide is Early E3 25 kDa glycoprotein (Canis lupus familiaris (Dog)).